Reading from the N-terminus, the 157-residue chain is Putative pre-16S rRNA nuclease (157 aa).

The protein belongs to the YqgF nuclease family.

It localises to the cytoplasm. In terms of biological role, could be a nuclease involved in processing of the 5'-end of pre-16S rRNA. This chain is Putative pre-16S rRNA nuclease, found in Parasynechococcus marenigrum (strain WH8102).